The sequence spans 354 residues: Isopentenyl-diphosphate delta-isomerase (354 aa).

Substrate is bound at residue 6-7 (RK). FMN contacts are provided by residues 63–65 (AMT), Ser93, and Asn122. Residue 93 to 95 (SQR) coordinates substrate. Residue Gln160 participates in substrate binding. Glu161 lines the Mg(2+) pocket. Residues Lys192, Thr221, 273–275 (GIR), and 294–295 (SQ) contribute to the FMN site.

Belongs to the IPP isomerase type 2 family. As to quaternary structure, homooctamer. Dimer of tetramers. Requires FMN as cofactor. It depends on NADPH as a cofactor. Mg(2+) serves as cofactor.

Its subcellular location is the cytoplasm. The enzyme catalyses isopentenyl diphosphate = dimethylallyl diphosphate. In terms of biological role, involved in the biosynthesis of isoprenoids. Catalyzes the 1,3-allylic rearrangement of the homoallylic substrate isopentenyl (IPP) to its allylic isomer, dimethylallyl diphosphate (DMAPP). This chain is Isopentenyl-diphosphate delta-isomerase, found in Pyrobaculum islandicum (strain DSM 4184 / JCM 9189 / GEO3).